The sequence spans 346 residues: S-adenosylmethionine:tRNA ribosyltransferase-isomerase (346 aa).

It belongs to the QueA family. As to quaternary structure, monomer.

It is found in the cytoplasm. The enzyme catalyses 7-aminomethyl-7-carbaguanosine(34) in tRNA + S-adenosyl-L-methionine = epoxyqueuosine(34) in tRNA + adenine + L-methionine + 2 H(+). Its pathway is tRNA modification; tRNA-queuosine biosynthesis. Functionally, transfers and isomerizes the ribose moiety from AdoMet to the 7-aminomethyl group of 7-deazaguanine (preQ1-tRNA) to give epoxyqueuosine (oQ-tRNA). The protein is S-adenosylmethionine:tRNA ribosyltransferase-isomerase of Nitrosomonas eutropha (strain DSM 101675 / C91 / Nm57).